Consider the following 172-residue polypeptide: Adenine phosphoribosyltransferase (172 aa).

This sequence belongs to the purine/pyrimidine phosphoribosyltransferase family. In terms of assembly, homodimer.

It is found in the cytoplasm. The catalysed reaction is AMP + diphosphate = 5-phospho-alpha-D-ribose 1-diphosphate + adenine. The protein operates within purine metabolism; AMP biosynthesis via salvage pathway; AMP from adenine: step 1/1. Catalyzes a salvage reaction resulting in the formation of AMP, that is energically less costly than de novo synthesis. The polypeptide is Adenine phosphoribosyltransferase (Clostridium novyi (strain NT)).